Consider the following 332-residue polypeptide: Glyceraldehyde-3-phosphate dehydrogenase 1 (332 aa).

NAD(+) is bound by residues 11–12, aspartate 32, and arginine 77; that span reads RI. Residues 148-150, threonine 179, 208-209, and arginine 231 each bind D-glyceraldehyde 3-phosphate; these read SCT and TG. Cysteine 149 acts as the Nucleophile in catalysis. NAD(+) is bound at residue asparagine 313.

The protein belongs to the glyceraldehyde-3-phosphate dehydrogenase family. Homotetramer.

Its subcellular location is the cytoplasm. The enzyme catalyses D-glyceraldehyde 3-phosphate + phosphate + NAD(+) = (2R)-3-phospho-glyceroyl phosphate + NADH + H(+). It functions in the pathway carbohydrate degradation; glycolysis; pyruvate from D-glyceraldehyde 3-phosphate: step 1/5. The sequence is that of Glyceraldehyde-3-phosphate dehydrogenase 1 (Gapdh1) from Drosophila melanogaster (Fruit fly).